The sequence spans 372 residues: Transcription factor MYB80 (372 aa).

2 consecutive HTH myb-type domains span residues 9 to 65 and 66 to 116; these read KDNV…RPDL and KHGE…KKKL. DNA-binding regions (H-T-H motif) lie at residues 37–61 and 89–112; these read WRLI…TNYL and WSVI…NTKL. Positions 298 to 311 are enriched in polar residues; that stretch reads MWSHQSLYSGSSGT. The disordered stretch occupies residues 298–347; it reads MWSHQSLYSGSSGTEEARRELPEKGNDSVGSSGGDDDAADDGKDSGKGAA. The span at 312 to 323 shows a compositional bias: basic and acidic residues; sequence EEARRELPEKGN.

It localises to the nucleus. Functionally, essential for tapetum development in anthers and microsporogenesis. May regulate the timing of tapetal programmed cell death (PCD) which is critical for pollen development. This Oryza sativa subsp. japonica (Rice) protein is Transcription factor MYB80.